Reading from the N-terminus, the 91-residue chain is uncharacterized protein (91 aa).

This is an uncharacterized protein from Bacillus anthracis.